The sequence spans 299 residues: Tyrosine recombinase XerD (299 aa).

One can recognise a Core-binding (CB) domain in the interval 2 to 89; sequence ETVNNNLQQF…AIRSFHQFLL (88 aa). Residues 110-293 enclose the Tyr recombinase domain; the sequence is RLPKALTIEE…TKTRMRDVYA (184 aa). Catalysis depends on residues R150, K174, H245, R248, and H271. Catalysis depends on Y280, which acts as the O-(3'-phospho-DNA)-tyrosine intermediate.

It belongs to the 'phage' integrase family. XerD subfamily. As to quaternary structure, forms a cyclic heterotetrameric complex composed of two molecules of XerC and two molecules of XerD.

The protein localises to the cytoplasm. Its function is as follows. Site-specific tyrosine recombinase, which acts by catalyzing the cutting and rejoining of the recombining DNA molecules. The XerC-XerD complex is essential to convert dimers of the bacterial chromosome into monomers to permit their segregation at cell division. It also contributes to the segregational stability of plasmids. The sequence is that of Tyrosine recombinase XerD from Halalkalibacterium halodurans (strain ATCC BAA-125 / DSM 18197 / FERM 7344 / JCM 9153 / C-125) (Bacillus halodurans).